The chain runs to 418 residues: Secreted aspartic protease 5 (418 aa).

The first 18 residues, 1 to 18 (MFLKNILSVLAFALLIDA), serve as a signal peptide directing secretion. A propeptide spans 19 to 76 (APVKRSPGFVTLDFNVKRSLVDPDDPTVEAKRSPLFLEFTPSEFPVDETGRDGDVDKR) (activation peptide). The region spanning 90–404 (YTADITVGSD…NLDDKKISMA (315 aa)) is the Peptidase A1 domain. The active site involves aspartate 108. Residue 108 to 110 (DTG) participates in pepstatin A binding. Cysteine 123 and cysteine 135 are disulfide-bonded. Position 161–162 (161–162 (GD)) interacts with pepstatin A. Glutamate 268 serves as a coordination point for Zn(2+). Residue aspartate 294 is part of the active site. 294–298 (DSGTT) lines the pepstatin A pocket. An intrachain disulfide couples cysteine 332 to cysteine 370.

This sequence belongs to the peptidase A1 family.

The protein resides in the secreted. It carries out the reaction Preferential cleavage at the carboxyl of hydrophobic amino acids, but fails to cleave 15-Leu-|-Tyr-16, 16-Tyr-|-Leu-17 and 24-Phe-|-Phe-25 of insulin B chain. Activates trypsinogen, and degrades keratin.. Inhibited by pepstatin A analogs. Functionally, secreted aspartic peptidases (SAPs) are a group of ten acidic hydrolases considered as key virulence factors. These enzymes supply the fungus with nutrient amino acids as well as are able to degrade the selected host's proteins involved in the immune defense. Moreover, acts toward human hemoglobin though limited proteolysis to generate a variety of antimicrobial hemocidins, enabling to compete with the other microorganisms of the same physiological niche using the microbicidal peptides generated from the host protein. In Candida albicans (strain SC5314 / ATCC MYA-2876) (Yeast), this protein is Secreted aspartic protease 5.